We begin with the raw amino-acid sequence, 229 residues long: Cytidylate kinase (229 aa).

Residue 12 to 20 (GPSGSGKGT) coordinates ATP.

It belongs to the cytidylate kinase family. Type 1 subfamily.

It is found in the cytoplasm. The catalysed reaction is CMP + ATP = CDP + ADP. The enzyme catalyses dCMP + ATP = dCDP + ADP. The polypeptide is Cytidylate kinase (Pseudomonas syringae pv. syringae (strain B728a)).